The chain runs to 366 residues: MTPEHLPTEQYEAQLAEKVVRLQTMMAPFAAPVPEVFRSPVSHYRMRAEFRLWHDGDDLYHIIFDQQTRSRIRVDSFPAASALINQLMTAMLEGVRNNPVLRQKLFQIDYLTTLSNQAVVSVLYHKKLDDAWREQAEALRDALRAQGLNVHLIGRATKTKIELDQDYIDERLPVGGREMIYRQVENSFTQPNAAMNIQMLEWALDVTKGATGDLLELYCGNGNFSLALARNFDRVLATEIAKPSVAAAQYNIAANHIDNVQIIRMAAEEFTQAMNGVRQFNRLQGIDLHSYQCETIFVDPPRSGLDSETEKMVQAYPRILYISCNPETLCRNLETLSQTHNVTRLALFDQFPYTHHMECGVLLTRK.

Glutamine 190, tyrosine 218, asparagine 223, glutamate 239, and aspartate 299 together coordinate S-adenosyl-L-methionine. The Nucleophile role is filled by cysteine 324. Catalysis depends on glutamate 358, which acts as the Proton acceptor.

It belongs to the class I-like SAM-binding methyltransferase superfamily. RNA M5U methyltransferase family. TrmA subfamily.

It carries out the reaction uridine(54) in tRNA + S-adenosyl-L-methionine = 5-methyluridine(54) in tRNA + S-adenosyl-L-homocysteine + H(+). The enzyme catalyses uridine(341) in tmRNA + S-adenosyl-L-methionine = 5-methyluridine(341) in tmRNA + S-adenosyl-L-homocysteine + H(+). Functionally, dual-specificity methyltransferase that catalyzes the formation of 5-methyluridine at position 54 (m5U54) in all tRNAs, and that of position 341 (m5U341) in tmRNA (transfer-mRNA). The chain is tRNA/tmRNA (uracil-C(5))-methyltransferase from Klebsiella pneumoniae subsp. pneumoniae (strain ATCC 700721 / MGH 78578).